The following is a 313-amino-acid chain: GTP cyclohydrolase MptA (313 aa).

The protein belongs to the GTP cyclohydrolase IV family. As to quaternary structure, homodimer. It depends on Fe(2+) as a cofactor.

The catalysed reaction is GTP + H2O = 7,8-dihydroneopterin 2',3'-cyclic phosphate + formate + diphosphate + H(+). Its pathway is cofactor biosynthesis; 5,6,7,8-tetrahydromethanopterin biosynthesis. Converts GTP to 7,8-dihydro-D-neopterin 2',3'-cyclic phosphate, the first intermediate in the biosynthesis of coenzyme methanopterin. The chain is GTP cyclohydrolase MptA from Methanosphaera stadtmanae (strain ATCC 43021 / DSM 3091 / JCM 11832 / MCB-3).